We begin with the raw amino-acid sequence, 723 residues long: Delta-like protein 1 (723 aa).

The first 17 residues, 1 to 17 (MGSRCALALAVLSALLC), serve as a signal peptide directing secretion. The Extracellular segment spans residues 18–545 (QVWSSGVFEL…LEGQGGPFPW (528 aa)). The DSL domain occupies 177-221 (FVCDEHYYGEGCSVFCRPRDDAFGHFTCGERGEKVCNPGWKGPYC). 27 disulfide bridges follow: cysteine 179–cysteine 188, cysteine 192–cysteine 204, cysteine 212–cysteine 221, cysteine 226–cysteine 237, cysteine 230–cysteine 243, cysteine 245–cysteine 254, cysteine 257–cysteine 268, cysteine 263–cysteine 274, cysteine 276–cysteine 285, cysteine 292–cysteine 304, cysteine 298–cysteine 314, cysteine 316–cysteine 325, cysteine 332–cysteine 343, cysteine 337–cysteine 352, cysteine 354–cysteine 363, cysteine 370–cysteine 381, cysteine 375–cysteine 391, cysteine 393–cysteine 402, cysteine 409–cysteine 420, cysteine 414–cysteine 429, cysteine 431–cysteine 440, cysteine 447–cysteine 458, cysteine 452–cysteine 467, cysteine 469–cysteine 478, cysteine 485–cysteine 496, cysteine 490–cysteine 505, and cysteine 507–cysteine 516. 3 EGF-like domains span residues 226–254 (CLPGCDEQHGFCDKPGECKCRVGWQGRYC), 257–285 (CIRYPGCLHGTCQQPWQCNCQEGWGGLFC), and 292–325 (CTHHKPCKNGATCTNTGQGSYTCSCRPGYTGATC). The region spanning 332–363 (CDPSPCKNGGSCTDLENSYSCTCPPGFYGKIC) is the EGF-like 4; calcium-binding domain. EGF-like domains follow at residues 370 to 402 (CADGPCFNGGRCSDSPDGGYSCRCPVGYSGFNC) and 409 to 440 (CSSSPCSNGAKCVDLGDAYLCRCQAGFSGRHC). The 32-residue stretch at 447–478 (CASSPCANGGTCRDGVNDFSCTCPPGYTGRNC) folds into the EGF-like 7; calcium-binding domain. An N-linked (GlcNAc...) asparagine glycan is attached at asparagine 477. The EGF-like 8 domain maps to 485–516 (CEHAPCHNGATCHERGHRYVCECARGYGGPNC). The helical transmembrane segment at 546 to 568 (VAVCAGVILVLMLLLGCAAVVVC) threads the bilayer. The Cytoplasmic portion of the chain corresponds to 569–723 (VRLRLQKHRP…KDECVIATEV (155 aa)). Lysine 613 participates in a covalent cross-link: Glycyl lysine isopeptide (Lys-Gly) (interchain with G-Cter in ubiquitin). Basic and acidic residues predominate over residues 653–664 (AVRDAHSKRDTK). Positions 653 to 702 (AVRDAHSKRDTKCQPQGSSGEEKGTPTTLRGGEASERKRPDSGCSTSKDT) are disordered. Phosphoserine; by PKB is present on serine 694. The residue at position 697 (serine 697) is a Phosphoserine. The interval 720–723 (ATEV) is interaction with MAGI1.

As to quaternary structure, homodimer. Interacts with TJP1. Interacts with MAGI1 (via PDZ domain); forms a complex with CTNNB1 and CDH2 and promotes recruitment to the adherens junction and stabilization on the cell surface. Interacts with PSEN1; undergoes a presenilin-dependent gamma-secretase cleavage that releases a Dll1-intracellular form. Interacts with MFAP5. Interacts with MIB1. Interacts with NEURL1B; leads to ubiquitination. Interacts with NEURL1. Interacts with SYNJ2BP; enhances DLL1 protein stability, and promotes Notch signaling in endothelial cells. Interacts with MAGI1, MAGI2, MAGI3 and MPDZ. Interacts (via ubiquitin) with EPN1 (via IUM domain); binding with NOTCH1 attached to neighboring cell, promotes ligand ubiquitination and EPN1 interaction, leading to NECD transendocytosis and Notch signaling. Interacts with NOTCH1. Interacts with NOTCH2NLB; leading to promote Notch signaling pathway in a cell-autonomous manner through inhibition of cis DLL1-NOTCH2 interactions. In terms of processing, ubiquitinated by MIB (MIB1 or MIB2), leading to its endocytosis and subsequent degradation. Ubiquitinated; promotes recycling back to the plasma membrane and confers a strong affinity for NOTCH1. Multi-ubiquitination of Lys-613 by MIB1 promotes both cis and trans-interaction with NOTCH1, as well as activation of Notch signaling. Ubiquitinated by NEURL1B. Phosphorylated in a membrane association-dependent manner. Phosphorylation at Ser-697 requires the presence of Ser-694, whereas phosphorylation at Ser-694 occurs independently of the other site. Phosphorylation is required for full ligand activity in vitro and affects surface presentation, ectodomain shedding, and endocytosis. Post-translationally, O-fucosylated. Can be elongated to a disaccharide by MFNG. In terms of tissue distribution, expressed in heart and pancreas, with lower expression in brain and muscle and almost no expression in placenta, lung, liver and kidney.

Its subcellular location is the apical cell membrane. It localises to the cell junction. The protein localises to the adherens junction. The protein resides in the membrane raft. Functionally, transmembrane ligand protein of NOTCH1, NOTCH2 and NOTCH3 receptors that binds the extracellular domain (ECD) of Notch receptor in a cis and trans fashion manner. Following transinteraction, ligand cells produce mechanical force that depends of a clathrin-mediated endocytosis, requiring ligand ubiquitination, EPN1 interaction, and actin polymerisation; these events promote Notch receptor extracellular domain (NECD) transendocytosis and triggers Notch signaling through induction of cleavage, hyperphosphorylation, and nuclear accumulation of the intracellular domain of Notch receptors (NICD). Is required for embryonic development and maintenance of adult stem cells in many different tissues and immune systeme; the DLL1-induced Notch signaling is mediated through an intercellular communication that regulates cell lineage, cell specification, cell patterning and morphogenesis through effects on differentiation and proliferation. Plays a role in brain development at different level, namely by regulating neuronal differentiation of neural precursor cells via cell-cell interaction, most likely through the lateral inhibitory system in an endogenous level dependent-manner. During neocortex development, Dll1-Notch signaling transmission is mediated by dynamic interactions between intermediate neurogenic progenitors and radial glia; the cell-cell interactions are mediated via dynamic and transient elongation processes, likely to reactivate/maintain Notch activity in neighboring progenitors, and coordinate progenitor cell division and differentiation across radial and zonal boundaries. During cerebellar development, regulates Bergmann glial monolayer formation and its morphological maturation through a Notch signaling pathway. At the retina and spinal cord level, regulates neurogenesis by preventing the premature differentiation of neural progenitors and also by maintaining progenitors in spinal cord through Notch signaling pathway. Also controls neurogenesis of the neural tube in a progenitor domain-specific fashion along the dorsoventral axis. Maintains quiescence of neural stem cells and plays a role as a fate determinant that segregates asymmetrically to one daughter cell during neural stem cells mitosis, resulting in neuronal differentiation in Dll1-inheriting cell. Plays a role in immune systeme development, namely the development of all T-cells and marginal zone (MZ) B-cells. Blocks the differentiation of progenitor cells into the B-cell lineage while promoting the emergence of a population of cells with the characteristics of a T-cell/NK-cell precursor. Also plays a role during muscle development. During early development, inhibits myoblasts differentiation from the medial dermomyotomal lip and later regulates progenitor cell differentiation. Directly modulates cell adhesion and basal lamina formation in satellite cells through Notch signaling. Maintains myogenic progenitors pool by suppressing differentiation through down-regulation of MYOD1 and is required for satellite cell homing and PAX7 expression. During craniofacial and trunk myogenesis suppresses differentiation of cranial mesoderm-derived and somite-derived muscle via MYOD1 regulation but in cranial mesoderm-derived progenitors, is neither required for satellite cell homing nor for PAX7 expression. Also plays a role during pancreatic cell development. During type B pancreatic cell development, may be involved in the initiation of proximodistal patterning in the early pancreatic epithelium. Stimulates multipotent pancreatic progenitor cells proliferation and pancreatic growth by maintaining HES1 expression and PTF1A protein levels. During fetal stages of development, is required to maintain arterial identity and the responsiveness of arterial endothelial cells for VEGFA through regulation of KDR activation and NRP1 expression. Controls sprouting angiogenesis and subsequent vertical branch formation through regulation on tip cell differentiation. Negatively regulates goblet cell differentiation in intestine and controls secretory fat commitment through lateral inhibition in small intestine. Plays a role during inner ear development; negatively regulates auditory hair cell differentiation. Plays a role during nephron development through Notch signaling pathway. Regulates growth, blood pressure and energy homeostasis. The polypeptide is Delta-like protein 1 (Homo sapiens (Human)).